The following is a 173-amino-acid chain: FMN reductase (NADH) RutF 2 (173 aa).

It belongs to the non-flavoprotein flavin reductase family. RutF subfamily.

It carries out the reaction FMNH2 + NAD(+) = FMN + NADH + 2 H(+). Its function is as follows. Catalyzes the reduction of FMN to FMNH2 which is used to reduce pyrimidine by RutA via the Rut pathway. This Rhizobium rhizogenes (strain K84 / ATCC BAA-868) (Agrobacterium radiobacter) protein is FMN reductase (NADH) RutF 2.